Reading from the N-terminus, the 266-residue chain is 2-C-methyl-D-erythritol 4-phosphate cytidylyltransferase (266 aa).

Over residues 234–251 (ADDARSAEARSAEARSEE) the composition is skewed to basic and acidic residues. Positions 234–266 (ADDARSAEARSAEARSEEPQFAGARSTDARSGG) are disordered.

It belongs to the IspD/TarI cytidylyltransferase family. IspD subfamily.

It catalyses the reaction 2-C-methyl-D-erythritol 4-phosphate + CTP + H(+) = 4-CDP-2-C-methyl-D-erythritol + diphosphate. The protein operates within isoprenoid biosynthesis; isopentenyl diphosphate biosynthesis via DXP pathway; isopentenyl diphosphate from 1-deoxy-D-xylulose 5-phosphate: step 2/6. In terms of biological role, catalyzes the formation of 4-diphosphocytidyl-2-C-methyl-D-erythritol from CTP and 2-C-methyl-D-erythritol 4-phosphate (MEP). This is 2-C-methyl-D-erythritol 4-phosphate cytidylyltransferase from Frankia casuarinae (strain DSM 45818 / CECT 9043 / HFP020203 / CcI3).